The following is a 1192-amino-acid chain: ATP-dependent helicase/deoxyribonuclease subunit B (1192 aa).

The protein belongs to the helicase family. AddB/RexB type 2 subfamily. In terms of assembly, heterodimer of AddA and RexB. Requires Mg(2+) as cofactor.

In terms of biological role, the heterodimer acts as both an ATP-dependent DNA helicase and an ATP-dependent, dual-direction single-stranded exonuclease. Recognizes the chi site generating a DNA molecule suitable for the initiation of homologous recombination. This subunit has 5' -&gt; 3' nuclease activity but not helicase activity. The chain is ATP-dependent helicase/deoxyribonuclease subunit B from Pediococcus pentosaceus (strain ATCC 25745 / CCUG 21536 / LMG 10740 / 183-1w).